Here is a 20-residue protein sequence, read N- to C-terminus: HQKYNPFRFVELVLVVDKAM.

The protein belongs to the venom metalloproteinase (M12B) family. P-III subfamily. In terms of assembly, monomer. Requires Zn(2+) as cofactor. In terms of tissue distribution, expressed by the venom gland.

The protein resides in the secreted. With respect to regulation, inhibited by ethylenediaminetetraacetic acid (EDTA) and 1,10-phenanthroline. Not inhibited by tosyl-L-lysine chloromethyl ketone (TCLK) and phenylmethanesulfonylfluoride (PMSF). Snake venom zinc metalloprotease that possesses hemorrhagic activity (minimum hemorrhagic dose, MHD=4.7 ug) when injected intradermally into mice. Degrades the alpha-chain of fibrinogen (FGA). The chain is Zinc metalloproteinase-disintegrin-like uracoina-1 from Crotalus vegrandis (Uracoan rattlesnake).